A 367-amino-acid chain; its full sequence is DNA polymerase IV (367 aa).

One can recognise a UmuC domain in the interval 14 to 198 (IIHIDMDAFF…LPIEKFHGVG (185 aa)). 2 residues coordinate Mg(2+): D18 and D116. Residue E117 is part of the active site.

It belongs to the DNA polymerase type-Y family. In terms of assembly, monomer. Requires Mg(2+) as cofactor.

It localises to the cytoplasm. It catalyses the reaction DNA(n) + a 2'-deoxyribonucleoside 5'-triphosphate = DNA(n+1) + diphosphate. Its function is as follows. Poorly processive, error-prone DNA polymerase involved in untargeted mutagenesis. Copies undamaged DNA at stalled replication forks, which arise in vivo from mismatched or misaligned primer ends. These misaligned primers can be extended by PolIV. Exhibits no 3'-5' exonuclease (proofreading) activity. May be involved in translesional synthesis, in conjunction with the beta clamp from PolIII. The chain is DNA polymerase IV from Streptococcus thermophilus (strain CNRZ 1066).